A 791-amino-acid polypeptide reads, in one-letter code: MSNQQEKYEAQNIVNSTEESDDAFDTVTIPVPSEEPQESDQTEEHESGIEQFSESHAIHVEEQSDQSFSSLEPDNEQLMEEVISPRQVSYTPQHHEKQYAMQRPNDDSLAFLDKIKSVKESLQESVEDSLATVKVVLIPVGQEIVIPFKVDTILKYLKDHFSHLLGIPHSVLQIRYSGKILKNNETLVQHGVKPQEIVQVEIFSTNPDLYPVRRIDGLTDVSQIITVTVQTGLDQYQQVPVEIVKSDFHKPFLGGFRHKVTGVEYHNAGTQTVPKRIPERLSIFCRDTQTVFQKKNLQQTTNTTSTQMTNIGVYVSNMTDKLVTPGKYFSAAEYHAQRLKAVIVIQTYYRQWHAKIFVENLRRQKSLRLEWETQQELRKIREKEEWIKLDYHRRHNPKTNEDFEFLYNALEFWRQEELTRINQSFTGAERKAALCELLEKETQIIASIGRHRYIAYMANQEAAIQAFLDKCSAPKIWRTPNGKTIEMDTQFTIRARELQNIYKCIMLKNISQDERLDVLLTLKHTVKEHECKLTQEILELIDREVDLMMRGVKHHNLEGLRKRIATLFFHYIKTPLFNPEVAKYLKVPQDPLKFYKKIYFCHSCQLYLPSTEFSVSSTSRRIYRCRNCINLQNEAQKRESFLKYKCLLQQLYYTEADYEDDSKIAFLMQLQDIQYLTENIWASQSVLSACDNLSDLVMVRWNKSLEWSPWNCILLTKDEAAAHLKLTSIEEGYERSFIHKIKHKHILAKNYFSQVPVLASFILDDGEIDEIRWKYHSDTTPKIIESQRPPH.

The interval M1 to P73 is disordered. Residues A131–P207 enclose the Ubiquitin-like domain. Positions R338–L367 constitute an IQ domain.

In terms of assembly, component of the axonemal radial spoke 1 (RS1) complex, at least composed of spoke head proteins RSPH1, RSPH3, RSPH9 and the cilia-specific component RSPH4A or sperm-specific component RSPH6A, spoke stalk proteins RSPH14, DNAJB13, DYDC1, ROPN1L and NME5, and the anchor protein IQUB. Does not appear to be part of radial spoke complexes 2 or 3 (RS2 or RS3). Interacts with CALM1. Interacts with DNAJB13. Interacts with DYNLL2. Interacts with NME5. Interacts with RSPH3. Interacts with RSPH9. Interacts with ZMYND10. Interacts with calmodulin; the interaction occurs in conditions of low but not high calcium.

It is found in the cytoplasm. Its subcellular location is the cytoskeleton. The protein resides in the flagellum axoneme. It localises to the cell projection. The protein localises to the cilium. Adapter protein that anchors the radial spoke 1 (RS1) complex to the A microtubule of outer doublet microtubules in axonemes. The triple radial spokes (RS1, RS2 and RS3) are required to modulate beating of the sperm flagellum. May play a role in inhibiting signaling via MAPK1/ERK2 and MAPK3/ERK1. Additionally, may play a role in the functioning of cilia. Not required for the functioning of tracheal or ependymal cilia. The protein is IQ motif and ubiquitin-like domain-containing protein (IQUB) of Homo sapiens (Human).